The primary structure comprises 335 residues: Expansin-like protein 3 (335 aa).

Positions 1–20 (MKFNTIFLVLSIVKFILISA) are cleaved as a signal peptide. At 21–314 (QSCPFSQSII…LNENENIESN (294 aa)) the chain is on the extracellular side. The region spanning 43–143 (AGNCGFEKLN…VKVPCEVSGN (101 aa)) is the Expansin-like EG45 domain. 2 cysteine pairs are disulfide-bonded: C46-C76 and C79-C138. An N-linked (GlcNAc...) asparagine glycan is attached at N87. The tract at residues 247 to 276 (YKPQTFNSQQTSNNQNSNTQTPTKQPSPNS) is disordered. Over residues 249–272 (PQTFNSQQTSNNQNSNTQTPTKQP) the composition is skewed to low complexity. Residues 315 to 335 (SLKLLPNFLLLILIILLNINF) traverse the membrane as a helical segment.

Belongs to the expansin family. Expansin A subfamily.

It localises to the membrane. Functionally, may serve to lubricate the movement of the cellulose microfibrils during cell growth and wall extension and/or may serve to maintain the fluid state of the slug cell wall. This Dictyostelium discoideum (Social amoeba) protein is Expansin-like protein 3 (expl3).